Reading from the N-terminus, the 463-residue chain is Type I restriction enzyme StySPI specificity subunit (463 aa).

Belongs to the type-I restriction system S methylase family. As to quaternary structure, the type I restriction/modification system is composed of three polypeptides R, M and S; the restriction enzyme has stoichiometry R(2)M(2)S(1) while the methyltransferase is M(2)S(1).

Functionally, the specificity (S) subunit of a type I restriction enzyme; this subunit dictates DNA sequence specificity. The M and S subunits together form a methyltransferase (MTase) that methylates A-2 on the top strand and A-3 on the bottom strand of the sequence 5'-AACN(6)GTRC-3'. In the presence of the R subunit the complex can also act as an endonuclease, binding to the same target sequence but cutting the DNA some distance from this site. Whether the DNA is cut or modified depends on the methylation state of the target sequence. When the target site is unmodified, the DNA is cut. When the target site is hemimethylated, the complex acts as a maintenance MTase modifying the DNA so that both strands become methylated. After locating a non-methylated recognition site, the enzyme complex serves as a molecular motor that translocates DNA in an ATP-dependent manner until a collision occurs that triggers cleavage. This chain is Type I restriction enzyme StySPI specificity subunit, found in Salmonella potsdam.